The chain runs to 411 residues: Zinc metalloproteinase/disintegrin (411 aa).

The first 20 residues, 1–20 (MIEVLLVTICLAVFPYQGSS), serve as a signal peptide directing secretion. The propeptide occupies 21 to 190 (IILESGNVND…KASQLYLTPE (170 aa)). A Peptidase M12B domain is found at 197 to 395 (RYVKLAIVVD…SKPQCILNAP (199 aa)). D284 is a binding site for Ca(2+). Cystine bridges form between C308–C390, C352–C374, and C354–C357. H333 lines the Zn(2+) pocket. Residue E334 is part of the active site. Zn(2+)-binding residues include H337 and H343. Residues C390 and N393 each coordinate Ca(2+). Positions 396–411 (LRTDTVSTPVSGNEPL) are excised as a propeptide.

It belongs to the venom metalloproteinase (M12B) family. P-II subfamily. Monomer. Zn(2+) serves as cofactor. In terms of tissue distribution, expressed by the venom gland.

It is found in the secreted. In terms of biological role, snake venom metalloproteinase that impairs hemostasis in the envenomed animal. This is Zinc metalloproteinase/disintegrin from Protobothrops mucrosquamatus (Taiwan habu).